A 27-amino-acid polypeptide reads, in one-letter code: Caerulein precursor fragment R7 (27 aa).

Expressed by the skin glands.

It localises to the secreted. Its function is as follows. Antimicrobial peptide. The chain is Caerulein precursor fragment R7 from Xenopus ruwenzoriensis (Uganda clawed frog).